Here is a 274-residue protein sequence, read N- to C-terminus: uncharacterized protein (274 aa).

The signal sequence occupies residues 1-19 (MKRINKVLLSLLCLVIAYA).

This is an uncharacterized protein from Rickettsia prowazekii (strain Madrid E).